A 455-amino-acid polypeptide reads, in one-letter code: Glutamyl-tRNA(Gln) amidotransferase subunit A (455 aa).

Residues lysine 74 and serine 149 each act as charge relay system in the active site. The Acyl-ester intermediate role is filled by serine 173.

The protein belongs to the amidase family. GatA subfamily. In terms of assembly, heterotrimer of A, B and C subunits.

It catalyses the reaction L-glutamyl-tRNA(Gln) + L-glutamine + ATP + H2O = L-glutaminyl-tRNA(Gln) + L-glutamate + ADP + phosphate + H(+). Its function is as follows. Allows the formation of correctly charged Gln-tRNA(Gln) through the transamidation of misacylated Glu-tRNA(Gln) in organisms which lack glutaminyl-tRNA synthetase. The reaction takes place in the presence of glutamine and ATP through an activated gamma-phospho-Glu-tRNA(Gln). This Methanosphaera stadtmanae (strain ATCC 43021 / DSM 3091 / JCM 11832 / MCB-3) protein is Glutamyl-tRNA(Gln) amidotransferase subunit A.